The sequence spans 388 residues: D-xylose dehydrogenase (388 aa).

Belongs to the Gfo/Idh/MocA family. Homotetramer. The cofactor is Zn(2+).

It catalyses the reaction D-xylose + NADP(+) = D-xylono-1,5-lactone + NADPH + H(+). The catalysed reaction is D-xylose + NAD(+) = D-xylono-1,5-lactone + NADH + H(+). It participates in carbohydrate metabolism; D-xylose degradation. Its function is as follows. Catalyzes the NADP(+)-dependent oxidation of D-xylose. Is able to use both NADP(+) and NAD(+); however, the enzyme shows a very strong preference for NADP(+). Is likely involved in the first step of the oxidative D-xylose degradation pathway. In Paenarthrobacter nicotinovorans (Arthrobacter nicotinovorans), this protein is D-xylose dehydrogenase (xdh).